The primary structure comprises 171 residues: Lipoprotein signal peptidase (171 aa).

4 helical membrane passes run 15–35 (WLWL…IVMD), 47–67 (VLPF…SFLS), 72–92 (WQRW…AYWM), and 107–127 (ALII…GFVV). Active-site residues include aspartate 128 and aspartate 146. The helical transmembrane segment at 141–161 (AFNLADSTICIGAAMIILDGF) threads the bilayer.

Belongs to the peptidase A8 family.

The protein localises to the cell inner membrane. It carries out the reaction Release of signal peptides from bacterial membrane prolipoproteins. Hydrolyzes -Xaa-Yaa-Zaa-|-(S,diacylglyceryl)Cys-, in which Xaa is hydrophobic (preferably Leu), and Yaa (Ala or Ser) and Zaa (Gly or Ala) have small, neutral side chains.. Its pathway is protein modification; lipoprotein biosynthesis (signal peptide cleavage). Its function is as follows. This protein specifically catalyzes the removal of signal peptides from prolipoproteins. This is Lipoprotein signal peptidase from Vibrio cholerae serotype O1 (strain ATCC 39541 / Classical Ogawa 395 / O395).